The sequence spans 102 residues: Small ribosomal subunit protein uS10 (102 aa).

It belongs to the universal ribosomal protein uS10 family. As to quaternary structure, part of the 30S ribosomal subunit.

Functionally, involved in the binding of tRNA to the ribosomes. The polypeptide is Small ribosomal subunit protein uS10 (Levilactobacillus brevis (strain ATCC 367 / BCRC 12310 / CIP 105137 / JCM 1170 / LMG 11437 / NCIMB 947 / NCTC 947) (Lactobacillus brevis)).